The primary structure comprises 531 residues: Jacalin-related lectin 16 (531 aa).

Jacalin-type lectin domains are found at residues 1–87, 90–232, 235–378, and 385–528; these read MDRS…YFTW, PTKM…YFTT, LISL…YFRP, and TEKV…NVLP.

This sequence belongs to the jacalin lectin family.

This Arabidopsis thaliana (Mouse-ear cress) protein is Jacalin-related lectin 16 (JAL16).